The sequence spans 631 residues: Chaperone protein DnaK (631 aa).

Phosphothreonine; by autocatalysis is present on T198. Positions 598-631 (YSAQQGGEQPGAAKKDDVVDAEFTEVDDDKKKSA) are disordered.

It belongs to the heat shock protein 70 family.

Functionally, acts as a chaperone. The sequence is that of Chaperone protein DnaK from Azorhizobium caulinodans (strain ATCC 43989 / DSM 5975 / JCM 20966 / LMG 6465 / NBRC 14845 / NCIMB 13405 / ORS 571).